Reading from the N-terminus, the 256-residue chain is MAVGKNKRLSKGKKGLKKKVIDPFTKKEWFDIKAPSTFENRAVGKTLINRSTGLKNAADGLKGRVVEVCLADLQGSEDHSSRKVKLRVDEVQGKNLLTNFHGIDFTTDKLRSLVRKWQSLVEANVTVKTSDDYVLRIFAIAFTKRQANQIRKTTYAQSSKLREVRKKMIEIMQREVSNCTLAQLTSKLIPEVIGREIEKSTQTILPLQNIHIRKVKLLKQPKFDLGSLLALHGEGSTEEKGKKVSAGFKDVVLETV.

Ala-2 is modified (N-acetylalanine; partial).

It belongs to the eukaryotic ribosomal protein eS1 family. In terms of assembly, component of the small ribosomal subunit. Mature ribosomes consist of a small (40S) and a large (60S) subunit. The 40S subunit contains about 33 different proteins and 1 molecule of RNA (18S). The 60S subunit contains about 49 different proteins and 3 molecules of RNA (25S, 5.8S and 5S).

Its subcellular location is the cytoplasm. The polypeptide is Small ribosomal subunit protein eS1A (Debaryomyces hansenii (strain ATCC 36239 / CBS 767 / BCRC 21394 / JCM 1990 / NBRC 0083 / IGC 2968) (Yeast)).